The sequence spans 176 residues: CASP-like protein 5A1 (176 aa).

The Cytoplasmic portion of the chain corresponds to 1–45 (MDASHPAVYPVGVPPTAVDPPPRVRMKDYEGMPSTLGGLVLRSGQ). Residues 46 to 66 (FACAVTALSIMISIPDFSSVT) form a helical membrane-spanning segment. Alanine 67 is a topological domain (extracellular). The helical transmembrane segment at 68–88 (FCYLVAAMALQLLWSVSLAVV) threads the bilayer. Residues 89 to 102 (DGYALLLRRTLHNP) lie on the Cytoplasmic side of the membrane. The chain crosses the membrane as a helical span at residues 103–123 (VLLSLLVIGDWVTSTLSLAAA). The Extracellular portion of the chain corresponds to 124–151 (CSSAGITVLIDSDLAQCAHNHCGRYEAA). Residues 152 to 172 (VAMAFLTWFLVSLSFFFSFWL) form a helical membrane-spanning segment. At 173–176 (LATR) the chain is on the cytoplasmic side.

Belongs to the Casparian strip membrane proteins (CASP) family. Homodimer and heterodimers.

The protein resides in the cell membrane. The polypeptide is CASP-like protein 5A1 (Selaginella moellendorffii (Spikemoss)).